The following is a 326-amino-acid chain: Phosphatidylinositol:ceramide inositolphosphotransferase (326 aa).

The next 6 helical transmembrane spans lie at 33-53 (LLLAGLVFQYIHGLAARGVHY), 82-102 (SVFTFIFISFLLWSFHPFIYH), 115-135 (VLAFLVASQFLRIITFYSTQL), 169-189 (VLFGCGDLIFSSHMIFTLVFV), 199-219 (RLIKILAWLMAIIQSLLIIAS), and 222-242 (HYSVDVVVAWYTVNLVVFFID). His181 is an active-site residue. Active-site residues include His222 and Asp226. Residues 306–326 (MNGKHGEDINHTLSDATPNGT) form a disordered region. Positions 316-326 (HTLSDATPNGT) are enriched in polar residues.

It belongs to the sphingomyelin synthase family.

The protein localises to the golgi apparatus. It is found in the trans-Golgi network membrane. In terms of biological role, catalyzes the transfer of the phosphorylinositol group from phosphatidylinositol (PI) to phytoceramide, an essential step in sphingolipid biosynthesis. May play an important role in modulating plant programmed cell death (PCD) associated with defense (e.g. toward Golovinomyces cichoracearum) by promoting sphingolipid metabolism and regulating ceramide accumulation. In Oryza sativa subsp. indica (Rice), this protein is Phosphatidylinositol:ceramide inositolphosphotransferase (ERH1).